We begin with the raw amino-acid sequence, 596 residues long: Elongation factor 4 (596 aa).

The tr-type G domain occupies 2-183 (KNIRNFSIIA…AIVRRVPAPD (182 aa)). Residues 14–19 (DHGKST) and 130–133 (NKID) each bind GTP.

It belongs to the TRAFAC class translation factor GTPase superfamily. Classic translation factor GTPase family. LepA subfamily.

It is found in the cell inner membrane. It catalyses the reaction GTP + H2O = GDP + phosphate + H(+). Functionally, required for accurate and efficient protein synthesis under certain stress conditions. May act as a fidelity factor of the translation reaction, by catalyzing a one-codon backward translocation of tRNAs on improperly translocated ribosomes. Back-translocation proceeds from a post-translocation (POST) complex to a pre-translocation (PRE) complex, thus giving elongation factor G a second chance to translocate the tRNAs correctly. Binds to ribosomes in a GTP-dependent manner. The polypeptide is Elongation factor 4 (Campylobacter curvus (strain 525.92)).